A 375-amino-acid polypeptide reads, in one-letter code: Transcription factor E2F4 (375 aa).

Residues 12–81 (SRHEKSLGLL…KNSIQWKGVG (70 aa)) mediate DNA binding. The leucine-zipper stretch occupies residues 39–61 (LKAAADTLAVRQKRRIYDITNVL). A DEF box motif is present at residues 44-81 (DTLAVRQKRRIYDITNVLEGIGLIEKKSKNSIQWKGVG). The segment at 82–177 (PGCNTREIAD…NTNGQKKFQI (96 aa)) is dimerization. The segment at 197–300 (SSAPVVVPVP…PDPSTSFQPI (104 aa)) is disordered. Residues 220 to 270 (STPQRPALTPQNDIATSPAPTVPHSTISNAESQDCPTGQTFSMENTTSSRL) show a composition bias toward polar residues. Low complexity predominate over residues 280–296 (SSASLDNSNDSPDPSTS). The segment at 299 to 375 (PIKSDLSDVL…CDLFDVPINL (77 aa)) is transactivation.

The protein belongs to the E2F/DP family. Component of the drtf1/e2f transcription factor complex. Component of the EDM complex, at least composed of e2f4, e2f5, mcidas and tfdp1.

The protein resides in the nucleus. Functionally, transcription activator that binds DNA cooperatively with DP proteins through the E2 recognition site, 5'-TTTC[CG]CGC-3' found in the promoter region of a number of genes. Component of the EDM complex, a complex specifically required for multiciliate cell differentiation: the EDM complex binds and activate genes required for centriole biogenesis. Activates genes required for centriole assembly (plk4, cep152) and genes specifically required for motile cilia formation (foxj1). Also promotes the deuterosome pathway of centriole biogenesis by activating expression of deup1, but not its paralog cep63. This Xenopus laevis (African clawed frog) protein is Transcription factor E2F4.